Consider the following 956-residue polypeptide: Pollen-specific leucine-rich repeat extensin-like protein 1 (956 aa).

Residues 1 to 30 form the signal peptide; it reads MTRRTMEKPFGCFLLLFCFTISIFFYSAAA. LRR repeat units lie at residues 39-59, 60-84, 119-143, 144-166, 168-191, 192-215, 217-238, 240-261, 262-285, 287-309, and 310-332; these read LTRRQLLALSENGDLPDDIEY, EVDLDLKFANNRLKRAYIALQAWKK, VLVVAGIDLNHADIAGYLPPELGLL, TDVALFHVNSNRFCGVIPKSLSK, TLMYEFDVSNNRFVGPFPTVALSW, PSLKFLDIRYNDFEGKLPPEIFDK, LDAIFLNNNRFESTIPETIGKS, ASVVTFAHNKFSGCIPKTIGQM, KNLNEIVFIGNNLSGCLPNEIGSL, NVTVFDASSNGFVGSLPSTLSGL, and ANVEQMDFSYNKFTGFVTDNICK. N-linked (GlcNAc...) asparagine glycans are attached at residues asparagine 273 and asparagine 287. Asparagine 338 carries an N-linked (GlcNAc...) asparagine glycan. Over residues 355 to 377 the composition is skewed to polar residues; sequence PGSSQEKQFDDTSNCLQNRPNQK. Disordered stretches follow at residues 355-380 and 397-956; these read PGSSQEKQFDDTSNCLQNRPNQKSAK and CAGG…FPGY. Residues 408 to 417 show a composition bias toward pro residues; it reads SPKPTPTPKA. Composition is skewed to basic and acidic residues over residues 431–441 and 452–534; these read EPSKPKPEESP and TPSH…EESP. The segment covering 640-830 has biased composition (pro residues); it reads QSPPVHSPPP…KPVTPLPPAT (191 aa). The tract at residues 651 to 956 is contains the Ser-Pro(4) repeats; the sequence is PPVHSPPPPV…SPPPPMFPGY (306 aa). A compositionally biased stretch (polar residues) spans 837-852; it reads PTPSSSESGEISTPVQ. Over residues 947–956 the composition is skewed to pro residues; the sequence is SPPPPMFPGY.

Hydroxylated on proline residues in the S-P-P-P-P repeat. Post-translationally, O-glycosylated on hydroxyprolines. As to expression, expressed in flowers, stamen, pollen, and pollinated carpels.

The protein resides in the secreted. It is found in the cell wall. Its function is as follows. Modulates cell morphogenesis by regulating cell wall formation and assembly, and/or growth polarization. The chain is Pollen-specific leucine-rich repeat extensin-like protein 1 (PEX1) from Arabidopsis thaliana (Mouse-ear cress).